Consider the following 40-residue polypeptide: Bomanin Short 6 (40 aa).

A signal peptide spans 1 to 18 (MKLLSITFLFGLLALASA). Residues 19-23 (NPLSP) constitute a propeptide, removed by a dipeptidylpeptidase. An intrachain disulfide couples C32 to C35.

Belongs to the bomanin family.

The protein resides in the secreted. Secreted immune-induced peptide induced by Toll signaling. Has a role in resistance to bacterial and fungal infections. The strength of antimicrobial activity appears to correlate with the overall level of expression. The sequence is that of Bomanin Short 6 from Drosophila melanogaster (Fruit fly).